Reading from the N-terminus, the 330-residue chain is Ketol-acid reductoisomerase (NADP(+)) (330 aa).

Residues 1–182 (MAVVYYDQDA…GATRAGVIET (182 aa)) form the KARI N-terminal Rossmann domain. NADP(+) contacts are provided by residues 25–28 (YGSQ), Arg48, Ser51, Ser53, and 83–86 (DETQ). The active site involves His108. Gly134 provides a ligand contact to NADP(+). One can recognise a KARI C-terminal knotted domain in the interval 183-328 (TFKEETETDL…DQLREMMSWL (146 aa)). Residues Asp191, Glu195, Glu227, and Glu231 each coordinate Mg(2+). Ser252 serves as a coordination point for substrate.

Belongs to the ketol-acid reductoisomerase family. Mg(2+) is required as a cofactor.

The catalysed reaction is (2R)-2,3-dihydroxy-3-methylbutanoate + NADP(+) = (2S)-2-acetolactate + NADPH + H(+). The enzyme catalyses (2R,3R)-2,3-dihydroxy-3-methylpentanoate + NADP(+) = (S)-2-ethyl-2-hydroxy-3-oxobutanoate + NADPH + H(+). Its pathway is amino-acid biosynthesis; L-isoleucine biosynthesis; L-isoleucine from 2-oxobutanoate: step 2/4. It participates in amino-acid biosynthesis; L-valine biosynthesis; L-valine from pyruvate: step 2/4. Involved in the biosynthesis of branched-chain amino acids (BCAA). Catalyzes an alkyl-migration followed by a ketol-acid reduction of (S)-2-acetolactate (S2AL) to yield (R)-2,3-dihydroxy-isovalerate. In the isomerase reaction, S2AL is rearranged via a Mg-dependent methyl migration to produce 3-hydroxy-3-methyl-2-ketobutyrate (HMKB). In the reductase reaction, this 2-ketoacid undergoes a metal-dependent reduction by NADPH to yield (R)-2,3-dihydroxy-isovalerate. The sequence is that of Ketol-acid reductoisomerase (NADP(+)) from Moorella thermoacetica (strain ATCC 39073 / JCM 9320).